Reading from the N-terminus, the 283-residue chain is Putative transposase InsK for insertion sequence element IS150 (283 aa).

Residues lysine 117–tyrosine 279 enclose the Integrase catalytic domain.

This sequence belongs to the transposase IS3/IS150/IS904 family.

Its function is as follows. Involved in the transposition of the insertion sequence IS150. This Escherichia coli (strain K12) protein is Putative transposase InsK for insertion sequence element IS150 (insK).